We begin with the raw amino-acid sequence, 337 residues long: Cytoskeleton protein RodZ (337 aa).

The Cytoplasmic segment spans residues 1–111 (MNTEATHDQN…LGKRRKKRDG (111 aa)). One can recognise an HTH cro/C1-type domain in the interval 19-71 (LRNAREQLGLSQQAVAERLCLKVSTVRDIEEDKAPADLASTFLRGYIRSYARL). The segment at residues 30–49 (QQAVAERLCLKVSTVRDIEE) is a DNA-binding region (H-T-H motif). Residues 112–132 (WLMTFTWLVLFVVIGLSGAWW) form a helical; Signal-anchor for type II membrane protein membrane-spanning segment. The Periplasmic portion of the chain corresponds to 133–337 (WQDHKAQQEE…TLNAEQSPAQ (205 aa)). Positions 145–167 (TMADQSSAELSSNSEQGQSVPLN) are enriched in polar residues. Residues 145 to 218 (TMADQSSAEL…AVVSPSQANV (74 aa)) form a disordered region. Residues 168-207 (TSTTTDPATTSTPPASVDTTATNTQTPAVTAPAPAVDPQQ) are compositionally biased toward low complexity. Over residues 208–218 (NAVVSPSQANV) the composition is skewed to polar residues.

The protein belongs to the RodZ family.

The protein resides in the cell inner membrane. Cytoskeletal protein that is involved in cell-shape control through regulation of the length of the long axis. This is Cytoskeleton protein RodZ from Shigella dysenteriae serotype 1 (strain Sd197).